The chain runs to 284 residues: RNase adapter protein RapZ (284 aa).

Position 8 to 15 (8 to 15) interacts with ATP; that stretch reads GRSGSGKS. 56–59 serves as a coordination point for GTP; it reads DVRN. The segment at 266–284 is RNA-binding; it reads RSRGKNVQSRHRTLEKRKQ.

Belongs to the RapZ-like family. RapZ subfamily. In terms of assembly, homotrimer.

Modulates the synthesis of GlmS, by affecting the processing and stability of the regulatory small RNA GlmZ. When glucosamine-6-phosphate (GlcN6P) concentrations are high in the cell, RapZ binds GlmZ and targets it to cleavage by RNase E. Consequently, GlmZ is inactivated and unable to activate GlmS synthesis. Under low GlcN6P concentrations, RapZ is sequestered and inactivated by an other regulatory small RNA, GlmY, preventing GlmZ degradation and leading to synthesis of GlmS. This Serratia proteamaculans (strain 568) protein is RNase adapter protein RapZ.